The sequence spans 264 residues: MSSLLKLHCIRPLPQRSVWLSGYKQKARCIHSSAANGDFMSWFKRKKQEEHQEPVKDTKQLIKDIEEGTNEASSQSSSNNKNRLELIPENFIGEGSRRCKRQKELKLAVSSAPFNQWLSRDKITSDNQLDDMILQATEKTLGKVDQDVQFSDLVAKFQFTKFLQSKSGYLIPDYELTTLSTPLQFKRYIKEKILPSANDPKLAYKEAEPNAIHPFSDNYASPNIYVVNDVTSKEQKSKYDTIMKEIQKLEDDATRKALETARSA.

Residues 1–75 constitute a mitochondrion transit peptide; sequence MSSLLKLHCI…EEGTNEASSQ (75 aa).

This sequence belongs to the mitochondrion-specific ribosomal protein mL50 family. Component of the mitochondrial large ribosomal subunit (mt-LSU). Mature yeast 74S mitochondrial ribosomes consist of a small (37S) and a large (54S) subunit. The 37S small subunit contains a 15S ribosomal RNA (15S mt-rRNA) and 34 different proteins. The 54S large subunit contains a 21S rRNA (21S mt-rRNA) and 46 different proteins.

The protein resides in the mitochondrion. Component of the mitochondrial ribosome (mitoribosome), a dedicated translation machinery responsible for the synthesis of mitochondrial genome-encoded proteins, including at least some of the essential transmembrane subunits of the mitochondrial respiratory chain. The mitoribosomes are attached to the mitochondrial inner membrane and translation products are cotranslationally integrated into the membrane. This chain is Large ribosomal subunit protein mL50 (MRPL13), found in Saccharomyces cerevisiae (strain ATCC 204508 / S288c) (Baker's yeast).